Reading from the N-terminus, the 156-residue chain is Small ribosomal subunit protein uS7 (156 aa).

It belongs to the universal ribosomal protein uS7 family. As to quaternary structure, part of the 30S ribosomal subunit. Contacts proteins S9 and S11.

Functionally, one of the primary rRNA binding proteins, it binds directly to 16S rRNA where it nucleates assembly of the head domain of the 30S subunit. Is located at the subunit interface close to the decoding center, probably blocks exit of the E-site tRNA. This Paracoccus denitrificans (strain Pd 1222) protein is Small ribosomal subunit protein uS7.